The chain runs to 501 residues: MLMSNLLILPLLLPAVCALGLVFIRTHSRLSRIFSIGTMAVTTVVSLLLLIYVMYHKPIALDFGGWQAPFGIQFVGDSLSLLLVTTSSFVVTLIMAYGFGRTEKRAIRYYLPSFILFLTVGVIGSFLTADLFNIYVMFEVMLLASFVLITLGQSVEQLRAAIIYVVLNILGSWLLLLGVGLLYKLTGTLNFTLVAQRLNEMDDKSSIVIVSMVFLIAFSAKAALVLFMWLPKAYAVLNTELAALFAALMTKVGAYALIRFFTLIFDEHSGITHPLLVFLSCITMLIGAFGVLAYRDIKKIAAYQVILSIGFIILGLGTNTIAGVNGAIFYLANDIVVKTLLFFIIGSLVYITGLRQYKSLYGLAKQEPFFGVAFVVMILAIGGVPPFSGFPGKVFIFKGAIENGNYIGLALMIITSLIAMFSLFRIFFVMYLGNENKGEAIVFNKIPTYRKNLIGVLVAMIIVMGLAAPLLFKVTDNATHLNMDDGLYEKMVNPHLIKGDK.

Helical transmembrane passes span 4-24, 33-53, 79-99, 109-129, 131-151, 162-182, 207-227, 245-265, 274-294, 309-329, 334-354, 369-389, 409-429, and 452-472; these read SNLLILPLLLPAVCALGLVFI, IFSIGTMAVTTVVSLLLLIYV, LSLLLVTTSSFVVTLIMAYGF, YYLPSFILFLTVGVIGSFLTA, LFNIYVMFEVMLLASFVLITL, IIYVVLNILGSWLLLLGVGLL, IVIVSMVFLIAFSAKAALVLF, FAALMTKVGAYALIRFFTLIF, PLLVFLSCITMLIGAFGVLAY, IGFIILGLGTNTIAGVNGAIF, DIVVKTLLFFIIGSLVYITGL, FFGVAFVVMILAIGGVPPFSG, LALMIITSLIAMFSLFRIFFV, and NLIGVLVAMIIVMGLAAPLLF.

This sequence belongs to the CPA3 antiporters (TC 2.A.63) subunit D family. As to quaternary structure, may form a heterooligomeric complex that consists of seven subunits: mnhA2, mnhB2, mnhC2, mnhD2, mnhE2, mnhF2 and mnhG2.

Its subcellular location is the cell membrane. This Staphylococcus saprophyticus subsp. saprophyticus (strain ATCC 15305 / DSM 20229 / NCIMB 8711 / NCTC 7292 / S-41) protein is Putative antiporter subunit mnhD2 (mnhD2).